Consider the following 148-residue polypeptide: Flavodoxin (148 aa).

The 142-residue stretch at Val-4–Val-145 folds into the Flavodoxin-like domain.

It belongs to the flavodoxin family. The cofactor is FMN.

Functionally, low-potential electron donor to a number of redox enzymes. The chain is Flavodoxin from Nitratidesulfovibrio vulgaris (strain DSM 19637 / Miyazaki F) (Desulfovibrio vulgaris).